The primary structure comprises 207 residues: Outer-membrane lipoprotein LolB (207 aa).

An N-terminal signal peptide occupies residues 1-21 (MPIRKVSLLRLIPLASLVLAA). Residue Cys-22 is the site of N-palmitoyl cysteine attachment. Cys-22 carries S-diacylglycerol cysteine lipidation.

Belongs to the LolB family. As to quaternary structure, monomer.

It is found in the cell outer membrane. Its function is as follows. Plays a critical role in the incorporation of lipoproteins in the outer membrane after they are released by the LolA protein. The polypeptide is Outer-membrane lipoprotein LolB (Serratia proteamaculans (strain 568)).